The primary structure comprises 182 residues: MQTEHVILLNAQGVPTGTLEKYAAHTADTRLHLAFSSWLFNAKGQLLVTRRALSKKAWPGVWTNSVCGHPQLGESNEDAVIRRCRYELGVEITPPESIYPDFRYRATDPNGIVENEVCPVFAARTTSALQINDDEVMDYQWCDLADVLHGIDATPWAFSPWMVMQAANSEARKLLSAFAQHN.

The Mn(2+) site is built by His-25 and His-32. The Nudix hydrolase domain maps to 30–164; the sequence is RLHLAFSSWL…PWAFSPWMVM (135 aa). Cys-67 is an active-site residue. Position 69 (His-69) interacts with Mn(2+). Glu-87 is a binding site for Mg(2+). Mn(2+) is bound by residues Glu-114 and Glu-116. Glu-116 is an active-site residue.

Belongs to the IPP isomerase type 1 family. Homodimer. Mg(2+) serves as cofactor. Requires Mn(2+) as cofactor.

It localises to the cytoplasm. The catalysed reaction is isopentenyl diphosphate = dimethylallyl diphosphate. Its pathway is isoprenoid biosynthesis; dimethylallyl diphosphate biosynthesis; dimethylallyl diphosphate from isopentenyl diphosphate: step 1/1. In terms of biological role, catalyzes the 1,3-allylic rearrangement of the homoallylic substrate isopentenyl (IPP) to its highly electrophilic allylic isomer, dimethylallyl diphosphate (DMAPP). The chain is Isopentenyl-diphosphate Delta-isomerase from Escherichia coli O139:H28 (strain E24377A / ETEC).